The chain runs to 272 residues: Tryptophan synthase alpha chain (272 aa).

Catalysis depends on proton acceptor residues glutamate 49 and glutamate 60.

It belongs to the TrpA family. In terms of assembly, tetramer of two alpha and two beta chains.

It carries out the reaction (1S,2R)-1-C-(indol-3-yl)glycerol 3-phosphate + L-serine = D-glyceraldehyde 3-phosphate + L-tryptophan + H2O. It participates in amino-acid biosynthesis; L-tryptophan biosynthesis; L-tryptophan from chorismate: step 5/5. Functionally, the alpha subunit is responsible for the aldol cleavage of indoleglycerol phosphate to indole and glyceraldehyde 3-phosphate. This Legionella pneumophila subsp. pneumophila (strain Philadelphia 1 / ATCC 33152 / DSM 7513) protein is Tryptophan synthase alpha chain.